The chain runs to 246 residues: 5-oxoprolinase subunit A (246 aa).

This sequence belongs to the LamB/PxpA family. Forms a complex composed of PxpA, PxpB and PxpC.

It carries out the reaction 5-oxo-L-proline + ATP + 2 H2O = L-glutamate + ADP + phosphate + H(+). Catalyzes the cleavage of 5-oxoproline to form L-glutamate coupled to the hydrolysis of ATP to ADP and inorganic phosphate. This is 5-oxoprolinase subunit A from Vibrio cholerae serotype O1 (strain M66-2).